We begin with the raw amino-acid sequence, 242 residues long: tRNA pseudouridine synthase A (242 aa).

D51 functions as the Nucleophile in the catalytic mechanism. Position 107 (Y107) interacts with substrate.

Belongs to the tRNA pseudouridine synthase TruA family. In terms of assembly, homodimer.

It carries out the reaction uridine(38/39/40) in tRNA = pseudouridine(38/39/40) in tRNA. In terms of biological role, formation of pseudouridine at positions 38, 39 and 40 in the anticodon stem and loop of transfer RNAs. This is tRNA pseudouridine synthase A from Helicobacter pylori (strain Shi470).